The sequence spans 91 residues: Potassium channel toxin TstKMK (91 aa).

A signal peptide spans 1 to 25 (MVATNRCCVFALLFALLLVHSLTEA). The propeptide occupies 26 to 42 (GKGKEILGKIKEKIIEA). The 34-residue stretch at 58 to 91 (EYACPAIDKFCEDHCAAKKAVGKCDDFKCKCIKL) folds into the BetaSPN-type CS-alpha/beta domain. Cystine bridges form between Cys-61–Cys-81, Cys-68–Cys-86, and Cys-72–Cys-88.

This sequence belongs to the long chain scorpion toxin family. Class 2 subfamily. In terms of tissue distribution, expressed by the venom gland.

It localises to the secreted. The full peptide presents antibacterial and cytotoxic activities. The synthetic C-terminus (AA 33-76) inhibits voltage-gated potassium channels Kv1.1/KCNA1, Kv1.2/KCNA2, and Kv1.3/KCNA3. In Tityus stigmurus (Brazilian scorpion), this protein is Potassium channel toxin TstKMK.